Consider the following 486-residue polypeptide: Cardiolipin synthase A (486 aa).

The next 2 helical transmembrane spans lie at Thr3 to Val23 and Met38 to Val58. 2 PLD phosphodiesterase domains span residues Met219–Arg246 and Glu399–Ser426. Residues His224, Lys226, Asp231, His404, Lys406, and Asp411 contribute to the active site.

The protein belongs to the phospholipase D family. Cardiolipin synthase subfamily. ClsA sub-subfamily.

Its subcellular location is the cell inner membrane. The catalysed reaction is 2 a 1,2-diacyl-sn-glycero-3-phospho-(1'-sn-glycerol) = a cardiolipin + glycerol. Its function is as follows. Catalyzes the reversible phosphatidyl group transfer from one phosphatidylglycerol molecule to another to form cardiolipin (CL) (diphosphatidylglycerol) and glycerol. The sequence is that of Cardiolipin synthase A from Salmonella arizonae (strain ATCC BAA-731 / CDC346-86 / RSK2980).